The following is a 238-amino-acid chain: Ribose-5-phosphate isomerase A (238 aa).

Substrate-binding positions include 30–33 (SGST), 87–90 (DGAD), and 100–103 (KGGG). The Proton acceptor role is filled by glutamate 109. A substrate-binding site is contributed by lysine 127.

The protein belongs to the ribose 5-phosphate isomerase family. As to quaternary structure, homodimer.

The enzyme catalyses aldehydo-D-ribose 5-phosphate = D-ribulose 5-phosphate. Its pathway is carbohydrate degradation; pentose phosphate pathway; D-ribose 5-phosphate from D-ribulose 5-phosphate (non-oxidative stage): step 1/1. Functionally, catalyzes the reversible conversion of ribose-5-phosphate to ribulose 5-phosphate. This is Ribose-5-phosphate isomerase A from Synechococcus sp. (strain CC9311).